Reading from the N-terminus, the 275-residue chain is Large ribosomal subunit protein uL2 (275 aa).

Positions 224–275 (AMNPVDHPHGGGEAKAGQGNPHPVTPWGVPTKGYKTRKNKRTQQFIVRDRRG) are disordered.

This sequence belongs to the universal ribosomal protein uL2 family. Part of the 50S ribosomal subunit. Forms a bridge to the 30S subunit in the 70S ribosome.

One of the primary rRNA binding proteins. Required for association of the 30S and 50S subunits to form the 70S ribosome, for tRNA binding and peptide bond formation. It has been suggested to have peptidyltransferase activity; this is somewhat controversial. Makes several contacts with the 16S rRNA in the 70S ribosome. In Xanthomonas axonopodis pv. citri (strain 306), this protein is Large ribosomal subunit protein uL2.